We begin with the raw amino-acid sequence, 680 residues long: Pescadillo homolog (680 aa).

The segment at 315–336 (GEDEKPKAITNGEGESETPTDA) is disordered. Positions 359–471 (DPSQLFANCT…ELKEPNQYAP (113 aa)) constitute a BRCT domain. Positions 494–680 (VPLEEQQTEA…ERKMAKGKAT (187 aa)) are disordered. Composition is skewed to acidic residues over residues 511–530 (DVED…DDEA), 543–556 (GSDD…EEAD), and 565–576 (AEVDDASEDDEQ). Composition is skewed to basic and acidic residues over residues 597-610 (KASE…DPKS), 617-635 (RKEL…ERAK), and 654-664 (NKKDAESEKLR). Positions 609–680 (KSKAKQQKRK…ERKMAKGKAT (72 aa)) form a coiled coil. The segment covering 665 to 680 (EKRRRIERKMAKGKAT) has biased composition (basic residues).

This sequence belongs to the pescadillo family. As to quaternary structure, component of the NOP7 complex, composed of ERB1, NOP7 and YTM1. The complex is held together by ERB1, which interacts with NOP7 via its N-terminal domain and with YTM1 via a high-affinity interaction between the seven-bladed beta-propeller domains of the 2 proteins. The NOP7 complex associates with the 66S pre-ribosome.

It localises to the nucleus. Its subcellular location is the nucleolus. It is found in the nucleoplasm. Its function is as follows. Component of the NOP7 complex, which is required for maturation of the 25S and 5.8S ribosomal RNAs and formation of the 60S ribosome. The polypeptide is Pescadillo homolog (Pyricularia oryzae (strain 70-15 / ATCC MYA-4617 / FGSC 8958) (Rice blast fungus)).